A 335-amino-acid chain; its full sequence is Biotin synthase (335 aa).

In terms of domain architecture, Radical SAM core spans 51-278 (NTVQLSSLLS…LAKVRLSAGR (228 aa)). The [4Fe-4S] cluster site is built by cysteine 66, cysteine 70, and cysteine 73. The [2Fe-2S] cluster site is built by cysteine 110, cysteine 141, cysteine 201, and arginine 273.

It belongs to the radical SAM superfamily. Biotin synthase family. Homodimer. [4Fe-4S] cluster is required as a cofactor. The cofactor is [2Fe-2S] cluster.

It catalyses the reaction (4R,5S)-dethiobiotin + (sulfur carrier)-SH + 2 reduced [2Fe-2S]-[ferredoxin] + 2 S-adenosyl-L-methionine = (sulfur carrier)-H + biotin + 2 5'-deoxyadenosine + 2 L-methionine + 2 oxidized [2Fe-2S]-[ferredoxin]. It participates in cofactor biosynthesis; biotin biosynthesis; biotin from 7,8-diaminononanoate: step 2/2. In terms of biological role, catalyzes the conversion of dethiobiotin (DTB) to biotin by the insertion of a sulfur atom into dethiobiotin via a radical-based mechanism. The protein is Biotin synthase of Bordetella bronchiseptica (strain ATCC BAA-588 / NCTC 13252 / RB50) (Alcaligenes bronchisepticus).